A 224-amino-acid chain; its full sequence is UPF0758 protein VV1_0825 (224 aa).

The segment at 1–20 (MSLKNLPSESMPREKLLQRG) is disordered. The region spanning 102–224 (ALTSPQHTKL…VVSFAERGWI (123 aa)) is the MPN domain. Zn(2+) is bound by residues H173, H175, and D186. The short motif at 173–186 (HNHPSGVAEPSQAD) is the JAMM motif element.

This sequence belongs to the UPF0758 family.

The chain is UPF0758 protein VV1_0825 from Vibrio vulnificus (strain CMCP6).